Consider the following 363-residue polypeptide: Aspartate carbamoyltransferase, chloroplastic (363 aa).

The tract at residues 1–21 (MAAARATLPLPRVPAPSPRPQ) is disordered. Residues 1–36 (MAAARATLPLPRVPAPSPRPQLRPFPSLPARRGAVA) constitute a chloroplast transit peptide. Over residues 11 to 21 (PRVPAPSPRPQ) the composition is skewed to pro residues. Carbamoyl phosphate is bound by residues R109 and T110. Residues R109 and T110 each coordinate UMP. Position 139 (K139) interacts with L-aspartate. Residues R160, H188, and Q191 each coordinate carbamoyl phosphate. UMP contacts are provided by R160 and H188. Residues R221 and R283 each contribute to the UMP site. Residues R221 and R283 each coordinate L-aspartate. Positions 323 and 324 each coordinate carbamoyl phosphate.

This sequence belongs to the aspartate/ornithine carbamoyltransferase superfamily. ATCase family. In terms of assembly, homotrimer.

It is found in the plastid. The protein localises to the chloroplast. The catalysed reaction is carbamoyl phosphate + L-aspartate = N-carbamoyl-L-aspartate + phosphate + H(+). It participates in pyrimidine metabolism; UMP biosynthesis via de novo pathway; (S)-dihydroorotate from bicarbonate: step 2/3. Feedback inhibited by UMP. Functionally, catalyzes the condensation of carbamoyl phosphate and aspartate to form carbamoyl aspartate and inorganic phosphate, the committed step in the de novo pyrimidine nucleotide biosynthesis pathway. The polypeptide is Aspartate carbamoyltransferase, chloroplastic (PYRB) (Oryza sativa subsp. japonica (Rice)).